The following is a 137-amino-acid chain: Large ribosomal subunit protein uL16 (137 aa).

It belongs to the universal ribosomal protein uL16 family. Part of the 50S ribosomal subunit.

Binds 23S rRNA and is also seen to make contacts with the A and possibly P site tRNAs. The protein is Large ribosomal subunit protein uL16 of Azorhizobium caulinodans (strain ATCC 43989 / DSM 5975 / JCM 20966 / LMG 6465 / NBRC 14845 / NCIMB 13405 / ORS 571).